The following is a 120-amino-acid chain: Ribonuclease P protein component (120 aa).

This sequence belongs to the RnpA family. Consists of a catalytic RNA component (M1 or rnpB) and a protein subunit.

It catalyses the reaction Endonucleolytic cleavage of RNA, removing 5'-extranucleotides from tRNA precursor.. Its function is as follows. RNaseP catalyzes the removal of the 5'-leader sequence from pre-tRNA to produce the mature 5'-terminus. It can also cleave other RNA substrates such as 4.5S RNA. The protein component plays an auxiliary but essential role in vivo by binding to the 5'-leader sequence and broadening the substrate specificity of the ribozyme. The sequence is that of Ribonuclease P protein component from Bordetella avium (strain 197N).